Reading from the N-terminus, the 676-residue chain is Putative Xaa-Pro dipeptidyl-peptidase (676 aa).

Catalysis depends on charge relay system residues serine 224, aspartate 330, and histidine 361. Residues 423-450 (RPGTGTQAGVGTLGLRTGSGTETFTDDP) form a disordered region.

It belongs to the peptidase S15 family.

The enzyme catalyses Hydrolyzes Xaa-Pro-|- bonds to release unblocked, N-terminal dipeptides from substrates including Ala-Pro-|-p-nitroanilide and (sequentially) Tyr-Pro-|-Phe-Pro-|-Gly-Pro-|-Ile.. This is Putative Xaa-Pro dipeptidyl-peptidase from Streptomyces avermitilis (strain ATCC 31267 / DSM 46492 / JCM 5070 / NBRC 14893 / NCIMB 12804 / NRRL 8165 / MA-4680).